The following is a 395-amino-acid chain: Elongation factor Tu (395 aa).

A tr-type G domain is found at 10 to 204; it reads KPHVNIGTIG…TVDSYIPEPA (195 aa). The tract at residues 19 to 26 is G1; sequence GHVDHGKT. 19–26 contacts GTP; sequence GHVDHGKT. Thr-26 lines the Mg(2+) pocket. Residues 60-64 form a G2 region; it reads GITIN. The tract at residues 81-84 is G3; that stretch reads DAPG. Residues 81 to 85 and 136 to 139 contribute to the GTP site; these read DAPGH and NKTD. Positions 136-139 are G4; sequence NKTD. The interval 174–176 is G5; the sequence is SAL.

The protein belongs to the TRAFAC class translation factor GTPase superfamily. Classic translation factor GTPase family. EF-Tu/EF-1A subfamily. In terms of assembly, monomer.

It is found in the cytoplasm. The enzyme catalyses GTP + H2O = GDP + phosphate + H(+). In terms of biological role, GTP hydrolase that promotes the GTP-dependent binding of aminoacyl-tRNA to the A-site of ribosomes during protein biosynthesis. This chain is Elongation factor Tu, found in Leuconostoc mesenteroides subsp. mesenteroides (strain ATCC 8293 / DSM 20343 / BCRC 11652 / CCM 1803 / JCM 6124 / NCDO 523 / NBRC 100496 / NCIMB 8023 / NCTC 12954 / NRRL B-1118 / 37Y).